Reading from the N-terminus, the 503-residue chain is MNQKKISLFGFFALTASMVLTVYEYPTFATSKLHLVFFLLLGGLLWFLPVALCAAEMATVEGWKNGGIFSWVSQTLGERFGFAAIFFQWFQITVGFVTMIYFILGALSYVLNFQALNTDPLIKFIGLLIIFWGLTFSQLGGTQRTAKLVKAGFVVGIVIPSIILFGLAAAYFIGGNPIEIPINKHAFVPDFSQVSTLVVFVSFILAYMGVEASASHINELENPKRNYPLAMILLVILAISLDAIGGFSVAAVIPQKDLSLSAGVIQTFQTLILHFNHHLGWLVKVIALMIAFGVMGEVSSWVVGPSRGMFAAAQRGLLPKFLRKTNTHEVPVPLVMIQGIIVTLWGAVLTFGGGGNNLSFLVAISLTVVIYLVGYLLFFIGYFVLIYKKQNLKRTYNVPGKRVGKTIIAGIGFLLSIFALFISFVPPASIAKNETHTYQMILLISFVVTAILPFIVYELHDKRGHDTIEEPRHFKARDVNPAIYPAARGEHHIIKKEEHILKH.

33-43 (LHLVFFLLLGG) is an L-glutamate binding site. Helical transmembrane passes span 35–55 (LVFF…LCAA), 153–173 (FVVG…AYFI), 194–214 (VSTL…EASA), 232–252 (ILLV…VAAV), 366–386 (LTVV…FVLI), 407–427 (IIAG…FVPP), and 440–460 (MILL…YELH).

It belongs to the amino acid-polyamine-organocation (APC) superfamily. Glutamate:GABA antiporter (GGA) (TC 2.A.3.7) family.

It localises to the cell membrane. The catalysed reaction is 4-aminobutanoate(in) + L-glutamate(out) = 4-aminobutanoate(out) + L-glutamate(in). Involved in glutaminase-dependent acid resistance. Exchanges extracellular glutamate (Glu) for intracellular gamma-aminobutyric acid (GABA) under acidic conditions. This is Glutamate/gamma-aminobutyrate antiporter (gadC) from Lactococcus lactis subsp. lactis (strain IL1403) (Streptococcus lactis).